The following is a 204-amino-acid chain: Holliday junction branch migration complex subunit RuvA (204 aa).

The interval Met1–Ser64 is domain I. The segment at His65–Lys143 is domain II. Positions Ser144 to Leu155 are flexible linker. Residues Asp156 to Leu204 form a domain III region.

Belongs to the RuvA family. Homotetramer. Forms an RuvA(8)-RuvB(12)-Holliday junction (HJ) complex. HJ DNA is sandwiched between 2 RuvA tetramers; dsDNA enters through RuvA and exits via RuvB. An RuvB hexamer assembles on each DNA strand where it exits the tetramer. Each RuvB hexamer is contacted by two RuvA subunits (via domain III) on 2 adjacent RuvB subunits; this complex drives branch migration. In the full resolvosome a probable DNA-RuvA(4)-RuvB(12)-RuvC(2) complex forms which resolves the HJ.

The protein localises to the cytoplasm. The RuvA-RuvB-RuvC complex processes Holliday junction (HJ) DNA during genetic recombination and DNA repair, while the RuvA-RuvB complex plays an important role in the rescue of blocked DNA replication forks via replication fork reversal (RFR). RuvA specifically binds to HJ cruciform DNA, conferring on it an open structure. The RuvB hexamer acts as an ATP-dependent pump, pulling dsDNA into and through the RuvAB complex. HJ branch migration allows RuvC to scan DNA until it finds its consensus sequence, where it cleaves and resolves the cruciform DNA. The protein is Holliday junction branch migration complex subunit RuvA of Histophilus somni (strain 2336) (Haemophilus somnus).